Here is a 148-residue protein sequence, read N- to C-terminus: uncharacterized protein (148 aa).

An N-terminal signal peptide occupies residues 1-16 (MDVLFIALLVAPLILG). An N-linked (GlcNAc...) asparagine glycan is attached at N50. The disordered stretch occupies residues 91 to 125 (MDPQNPVTTKPVTTEPVTTEPVTTEPQSPNQNDAM). Positions 96–116 (PVTTKPVTTEPVTTEPVTTEP) are enriched in low complexity.

The protein localises to the secreted. This is an uncharacterized protein from Mus musculus (Mouse).